The chain runs to 394 residues: MTNIIRQFLRQEAAGGLILIIAAAIALLMANSALQGVYQSFLDIPVSIKIASLDISKPLLLWINDGLMAVFFLMIGLEVKRELMEGSLAGRDKAVFPAIAALGGMLAPALIYLLFNGADEVTRQGWAIPAATDIAFALGVMALLGNRVPTGLKVFLLALAIIDDLGVIIIIALFYTQQVSLQSLGIAAAAIALLAYMNWRGVGKTSAYLLVGLVLWVCILKSGVHATLAGVIVGFMIPLHTQDQRSPSESLEHGLHPWVAYLILPLFAFANAGVSLQGVSLSGLTSLLPMGIATGLFIGKPLGIFTFSWLAVKLGIAKLPDAINFKQIFAVSVLCGIGFTMSIFIASLAFEGTDIALTTYSKLGILLGSTTAAVVGYSLLRLVLPAWRKAVNVR.

The next 11 helical transmembrane spans lie at 14-34 (AGGL…NSAL), 59-79 (LLLW…GLEV), 95-115 (VFPA…YLLF), 125-145 (GWAI…ALLG), 154-174 (VFLL…IALF), 179-199 (VSLQ…YMNW), 213-233 (LVLW…GVIV), 254-274 (GLHP…NAGV), 292-312 (IATG…WLAV), 328-348 (IFAV…IASL), and 363-383 (LGIL…LRLV).

Belongs to the NhaA Na(+)/H(+) (TC 2.A.33) antiporter family.

The protein resides in the cell inner membrane. The enzyme catalyses Na(+)(in) + 2 H(+)(out) = Na(+)(out) + 2 H(+)(in). In terms of biological role, na(+)/H(+) antiporter that extrudes sodium in exchange for external protons. The sequence is that of Na(+)/H(+) antiporter NhaA from Yersinia pestis bv. Antiqua (strain Angola).